A 501-amino-acid chain; its full sequence is G protein-activated inward rectifier potassium channel 1 (501 aa).

Residues 1–40 are disordered; the sequence is MSALRRKFGDDYQVVTTSSSGSGLQPQGPGQGPQQQLVPK. The Cytoplasmic segment spans residues 1–80; the sequence is MSALRRKFGD…LFTTLVDLKW (80 aa). The segment covering 18–37 has biased composition (low complexity); the sequence is SSSGSGLQPQGPGQGPQQQL. The chain crosses the membrane as a helical span at residues 81-105; the sequence is RWNLFIFILTYTVAWLFMASMWWVI. Residues 106 to 129 are Extracellular-facing; sequence AYTRGDLNKAHVGNYTPCVANVYN. Asn119 is a glycosylation site (N-linked (GlcNAc...) asparagine). Residues 130–141 constitute an intramembrane region (helical; Pore-forming); the sequence is FPSAFLFFIETE. The segment at residues 142–148 is an intramembrane region (pore-forming); that stretch reads ATIGYGY. Residues 143-148 carry the Selectivity filter motif; that stretch reads TIGYGY. Topologically, residues 149–157 are extracellular; sequence RYITDKCPE. The chain crosses the membrane as a helical span at residues 158-179; it reads GIILFLFQSILGSIVDAFLIGC. Over 180 to 501 the chain is Cytoplasmic; sequence MFIKMSQPKK…LRKMNSDRFT (322 aa). The interval 182–209 is polyphosphoinositide (PIP2)-binding; it reads IKMSQPKKRAETLMFSEHAVISMRDGKL. A phosphoserine mark is found at Ser385 and Ser424.

This sequence belongs to the inward rectifier-type potassium channel (TC 1.A.2.1) family. KCNJ3 subfamily. In terms of assembly, associates with KCNJ5/GIRK4 or KCNJ6/GIRK2 or KCNJ9/GIRK3 to form a G-protein activated heteromultimer pore-forming unit. The resulting inward current is much larger.

It localises to the membrane. The catalysed reaction is K(+)(in) = K(+)(out). Heteromultimer composed of KCNJ3/GIRK1 and KCNJ5/GIRK4 is activated by phosphatidylinositol 4,5 biphosphate (PtdIns(4,5)P2). In terms of biological role, inward rectifier potassium channels are characterized by a greater tendency to allow potassium to flow into the cell rather than out of it. Their voltage dependence is regulated by the concentration of extracellular potassium; as external potassium is raised, the voltage range of the channel opening shifts to more positive voltages. The inward rectification is mainly due to the blockage of outward current by internal magnesium. This potassium channel is controlled by G proteins. This receptor plays a crucial role in regulating the heartbeat. The sequence is that of G protein-activated inward rectifier potassium channel 1 (KCNJ3) from Bos taurus (Bovine).